Consider the following 210-residue polypeptide: Urease accessory protein UreE (210 aa).

The disordered stretch occupies residues 144–210; sequence PEGGAYAAGG…GHAHPHSLAR (67 aa). Residues 156-202 are compositionally biased toward basic and acidic residues; the sequence is HGHDHPHHDHGHDHAHAHAHGTEACDHEHSHDHDCGHHHDHGQDYGH.

This sequence belongs to the UreE family.

The protein resides in the cytoplasm. Its function is as follows. Involved in urease metallocenter assembly. Binds nickel. Probably functions as a nickel donor during metallocenter assembly. In Paracidovorax citrulli (strain AAC00-1) (Acidovorax citrulli), this protein is Urease accessory protein UreE.